The primary structure comprises 373 residues: Glutamate 5-kinase (373 aa).

An ATP-binding site is contributed by lysine 12. 3 residues coordinate substrate: serine 52, aspartate 139, and asparagine 154. ATP is bound at residue 216 to 222 (TGGMVTK). In terms of domain architecture, PUA spans 281 to 359 (RGNICIDDGA…DEINTVLAGN (79 aa)).

It belongs to the glutamate 5-kinase family.

The protein localises to the cytoplasm. It catalyses the reaction L-glutamate + ATP = L-glutamyl 5-phosphate + ADP. The protein operates within amino-acid biosynthesis; L-proline biosynthesis; L-glutamate 5-semialdehyde from L-glutamate: step 1/2. Functionally, catalyzes the transfer of a phosphate group to glutamate to form L-glutamate 5-phosphate. The protein is Glutamate 5-kinase of Dehalococcoides mccartyi (strain ATCC BAA-2266 / KCTC 15142 / 195) (Dehalococcoides ethenogenes (strain 195)).